Reading from the N-terminus, the 224-residue chain is 7-cyano-7-deazaguanine synthase (224 aa).

10-20 (FSGGQDSTTCL) lines the ATP pocket. Cysteine 193, cysteine 201, cysteine 204, and cysteine 207 together coordinate Zn(2+).

This sequence belongs to the QueC family. Zn(2+) serves as cofactor.

The enzyme catalyses 7-carboxy-7-deazaguanine + NH4(+) + ATP = 7-cyano-7-deazaguanine + ADP + phosphate + H2O + H(+). It functions in the pathway purine metabolism; 7-cyano-7-deazaguanine biosynthesis. Its function is as follows. Catalyzes the ATP-dependent conversion of 7-carboxy-7-deazaguanine (CDG) to 7-cyano-7-deazaguanine (preQ(0)). The chain is 7-cyano-7-deazaguanine synthase from Neisseria gonorrhoeae (strain ATCC 700825 / FA 1090).